A 63-amino-acid chain; its full sequence is MGRIRQTFIKRTGEELIEKFADKFTSDFEENKKAVEEVAMISTKPLRNRIAGYVTAKVKKMNA.

It belongs to the eukaryotic ribosomal protein eS17 family.

The sequence is that of Small ribosomal subunit protein eS17 from Methanococcus maripaludis (strain DSM 14266 / JCM 13030 / NBRC 101832 / S2 / LL).